We begin with the raw amino-acid sequence, 396 residues long: Inositol polyphosphate 1-phosphatase (396 aa).

Asp54 lines the Li(+) pocket. Glu79 is a binding site for Mg(2+). Glu80 contributes to the Li(+) binding site. Positions 153 and 155 each coordinate Mg(2+). 1D-myo-inositol 1,4-bisphosphate contacts are provided by Asp156, Ser157, Thr158, Ser264, Lys266, Gly286, Ala287, Lys290, and Thr308. Asp313 contacts Mg(2+). Residue Ser314 is modified to Phosphoserine.

This sequence belongs to the inositol monophosphatase superfamily. In terms of assembly, monomer. It depends on Mg(2+) as a cofactor.

The enzyme catalyses 1D-myo-inositol 1,4-bisphosphate + H2O = 1D-myo-inositol 4-phosphate + phosphate. It catalyses the reaction 1D-myo-inositol 1,3,4-trisphosphate + H2O = 1D-myo-inositol 3,4-bisphosphate + phosphate. It functions in the pathway signal transduction; phosphatidylinositol signaling pathway. Inhibited by Li(+). Functionally, mg(2+)-dependent phosphatase that catalyzes the hydrolysis of the 1-position phosphate from inositol 1,4-bisphosphate and inositol 1,3,4-trisphosphate and participates in inositol phosphate metabolism. In Mus musculus (Mouse), this protein is Inositol polyphosphate 1-phosphatase.